The primary structure comprises 454 residues: Glutamyl-tRNA reductase (454 aa).

Residues 49–52 (TCNR), serine 109, 114–116 (ETQ), and glutamine 120 contribute to the substrate site. The active-site Nucleophile is cysteine 50. NADP(+) is bound at residue 189 to 194 (GAGKMS). Over residues 432–442 (DHAEQSWKEGQ) the composition is skewed to basic and acidic residues. The disordered stretch occupies residues 432 to 454 (DHAEQSWKEGQRPSLNQGMALRT).

The protein belongs to the glutamyl-tRNA reductase family. As to quaternary structure, homodimer.

It carries out the reaction (S)-4-amino-5-oxopentanoate + tRNA(Glu) + NADP(+) = L-glutamyl-tRNA(Glu) + NADPH + H(+). The protein operates within porphyrin-containing compound metabolism; protoporphyrin-IX biosynthesis; 5-aminolevulinate from L-glutamyl-tRNA(Glu): step 1/2. Its function is as follows. Catalyzes the NADPH-dependent reduction of glutamyl-tRNA(Glu) to glutamate 1-semialdehyde (GSA). The polypeptide is Glutamyl-tRNA reductase (Shouchella clausii (strain KSM-K16) (Alkalihalobacillus clausii)).